The chain runs to 288 residues: Elongation factor Ts (288 aa).

The involved in Mg(2+) ion dislocation from EF-Tu stretch occupies residues 82-85; that stretch reads TDFV.

This sequence belongs to the EF-Ts family.

Its subcellular location is the cytoplasm. Associates with the EF-Tu.GDP complex and induces the exchange of GDP to GTP. It remains bound to the aminoacyl-tRNA.EF-Tu.GTP complex up to the GTP hydrolysis stage on the ribosome. This is Elongation factor Ts from Chlorobaculum tepidum (strain ATCC 49652 / DSM 12025 / NBRC 103806 / TLS) (Chlorobium tepidum).